The following is a 141-amino-acid chain: HTH-type transcriptional repressor NsrR (141 aa).

An HTH rrf2-type domain is found at 2 to 129 (QLTSFTDYAL…DDCTIEELLS (128 aa)). The segment at residues 28-51 (ITEVTDLFGVSRNHMVKVINRLGQ) is a DNA-binding region (H-T-H motif). Residues Cys-91, Cys-96, and Cys-102 each contribute to the [2Fe-2S] cluster site.

The cofactor is [2Fe-2S] cluster.

Nitric oxide-sensitive repressor of genes involved in protecting the cell against nitrosative stress. May require iron for activity. The chain is HTH-type transcriptional repressor NsrR from Vibrio campbellii (strain ATCC BAA-1116).